Consider the following 213-residue polypeptide: Thiamine-phosphate synthase (213 aa).

4-amino-2-methyl-5-(diphosphooxymethyl)pyrimidine contacts are provided by residues 40–44 and N75; that span reads QFREK. Residues D76 and D95 each coordinate Mg(2+). Residue S113 participates in 4-amino-2-methyl-5-(diphosphooxymethyl)pyrimidine binding. 139–141 is a 2-[(2R,5Z)-2-carboxy-4-methylthiazol-5(2H)-ylidene]ethyl phosphate binding site; the sequence is TPS. K142 is a binding site for 4-amino-2-methyl-5-(diphosphooxymethyl)pyrimidine. 2-[(2R,5Z)-2-carboxy-4-methylthiazol-5(2H)-ylidene]ethyl phosphate contacts are provided by residues G171 and 191-192; that span reads IS.

This sequence belongs to the thiamine-phosphate synthase family. The cofactor is Mg(2+).

The catalysed reaction is 2-[(2R,5Z)-2-carboxy-4-methylthiazol-5(2H)-ylidene]ethyl phosphate + 4-amino-2-methyl-5-(diphosphooxymethyl)pyrimidine + 2 H(+) = thiamine phosphate + CO2 + diphosphate. The enzyme catalyses 2-(2-carboxy-4-methylthiazol-5-yl)ethyl phosphate + 4-amino-2-methyl-5-(diphosphooxymethyl)pyrimidine + 2 H(+) = thiamine phosphate + CO2 + diphosphate. It carries out the reaction 4-methyl-5-(2-phosphooxyethyl)-thiazole + 4-amino-2-methyl-5-(diphosphooxymethyl)pyrimidine + H(+) = thiamine phosphate + diphosphate. The protein operates within cofactor biosynthesis; thiamine diphosphate biosynthesis; thiamine phosphate from 4-amino-2-methyl-5-diphosphomethylpyrimidine and 4-methyl-5-(2-phosphoethyl)-thiazole: step 1/1. Functionally, condenses 4-methyl-5-(beta-hydroxyethyl)thiazole monophosphate (THZ-P) and 2-methyl-4-amino-5-hydroxymethyl pyrimidine pyrophosphate (HMP-PP) to form thiamine monophosphate (TMP). The protein is Thiamine-phosphate synthase of Staphylococcus aureus (strain JH1).